Reading from the N-terminus, the 444-residue chain is Shufflon protein B' (444 aa).

The constant region stretch occupies residues 1–361; the sequence is MKKYDRGWAS…TGAILSCQSG (361 aa). Residues 362–444 form a variable region region; that stretch reads TWRKVGSGEL…GSITVYAICQ (83 aa).

This is Shufflon protein B' from Escherichia coli.